The chain runs to 144 residues: Large ribosomal subunit protein uL13 (144 aa).

The protein belongs to the universal ribosomal protein uL13 family. As to quaternary structure, part of the 50S ribosomal subunit.

This protein is one of the early assembly proteins of the 50S ribosomal subunit, although it is not seen to bind rRNA by itself. It is important during the early stages of 50S assembly. The protein is Large ribosomal subunit protein uL13 of Nitratidesulfovibrio vulgaris (strain ATCC 29579 / DSM 644 / CCUG 34227 / NCIMB 8303 / VKM B-1760 / Hildenborough) (Desulfovibrio vulgaris).